The sequence spans 221 residues: Dynein light chain Tctex-type 4 (221 aa).

Disordered regions lie at residues 1 to 52 and 65 to 87; these read MASR…SRRG and NSLV…VPPL. Residues 10–21 are compositionally biased toward basic and acidic residues; the sequence is RQEEENAKDSGR. Position 66 is a phosphoserine (Ser66).

The protein belongs to the dynein light chain Tctex-type family. Interacts with ENG/endoglin, TGFBR2 and TGFBR3. Interacts with PPP1CC. In terms of tissue distribution, ubiquitously expressed. Expressed in testis (at protein level).

It localises to the cell projection. The protein localises to the cilium. It is found in the flagellum. The protein resides in the cytoplasmic vesicle. Its subcellular location is the secretory vesicle. It localises to the acrosome. The protein localises to the cytoplasm. It is found in the cytoskeleton. The protein resides in the cilium axoneme. Its subcellular location is the nucleus. It localises to the microtubule organizing center. This is Dynein light chain Tctex-type 4 from Homo sapiens (Human).